We begin with the raw amino-acid sequence, 354 residues long: DnaJ homolog shv (354 aa).

An N-terminal signal peptide occupies residues 1–22 (MQLIKCLVIIQLSLLLVEESFA). Residues 25-90 (DFYKILNVKK…DKRKTYDRCG (66 aa)) form the J domain. Residues Asn-260 and Asn-312 are each glycosylated (N-linked (GlcNAc...) asparagine).

As to expression, in the testes, detected at low levels in somatic hub cells, cyst stem cells and the apical tip (at protein level). Levels in the testes decrease with age (at protein level). Expressed at low levels in hub cells, cyst stem cells and germline stem cells, and at high levels in spermatocytes and cyst cells.

The protein resides in the nucleus. Its subcellular location is the cell membrane. It is found in the secreted. Functionally, maintains stem cell niche architecture in the testes. Activates an extracellular integrin beta-PS pathway which regulates DE-cadherin (shg) levels in somatic hub cells, and is essential for maintaining the number of germline stem cells and the structure and localization of hub cells. The chain is DnaJ homolog shv from Drosophila melanogaster (Fruit fly).